Consider the following 144-residue polypeptide: Large ribosomal subunit protein uL15 (144 aa).

The segment at 1–53 (MRLNTLSPAEGAKHSAKRLGRGIGSGLGKTGGRGHKGQKSRTGGGVRRGFEGG) is disordered. Positions 21 to 31 (RGIGSGLGKTG) are enriched in gly residues.

The protein belongs to the universal ribosomal protein uL15 family. Part of the 50S ribosomal subunit.

Its function is as follows. Binds to the 23S rRNA. This is Large ribosomal subunit protein uL15 from Haemophilus influenzae (strain ATCC 51907 / DSM 11121 / KW20 / Rd).